Here is a 504-residue protein sequence, read N- to C-terminus: Arabinose import ATP-binding protein AraG (504 aa).

2 ABC transporter domains span residues 8 to 243 and 256 to 499; these read LSFR…MVGR and YGEE…MPKV. 40 to 47 contributes to the ATP binding site; that stretch reads GENGAGKS.

The protein belongs to the ABC transporter superfamily. Arabinose importer (TC 3.A.1.2.2) family. As to quaternary structure, the complex is composed of two ATP-binding proteins (AraG), two transmembrane proteins (AraH) and a solute-binding protein (AraF).

Its subcellular location is the cell inner membrane. It catalyses the reaction L-arabinose(out) + ATP + H2O = L-arabinose(in) + ADP + phosphate + H(+). In terms of biological role, part of the ABC transporter complex AraFGH involved in arabinose import. Responsible for energy coupling to the transport system. This is Arabinose import ATP-binding protein AraG from Shigella boydii serotype 4 (strain Sb227).